The sequence spans 162 residues: Phospholipase A and acyltransferase 3 (162 aa).

At 1–133 (MLAPIPEPKP…VPRSDQVRDA (133 aa)) the chain is on the cytoplasmic side. An LRAT domain is found at 13–129 (LIEIFRPMYR…LRYGVPRSDQ (117 aa)). Active-site residues include His23 and His35. Cys113 acts as the Acyl-thioester intermediate in catalysis. Residues 134–154 (VKAVGIAGVGLAALGLVGVML) form a helical membrane-spanning segment. Topologically, residues 155-162 (SRNKKQKQ) are lumenal.

The protein belongs to the H-rev107 family. Interacts with PPP2R1A; this interaction might decrease PP2A activity. As to expression, ubiquitously expressed in normal tissues but down-regulated in primary carcinomas or in many cell lines derived from tumors. Highly expressed in white adipose tissue and in adipocytes. Expressed at lower levels in brown adipose tissue.

It is found in the cell membrane. It localises to the cytoplasm. The protein resides in the cytosol. The protein localises to the perinuclear region. Its subcellular location is the peroxisome membrane. It is found in the mitochondrion membrane. It localises to the nucleus envelope. The protein resides in the lysosome membrane. The protein localises to the endoplasmic reticulum membrane. It carries out the reaction a 1,2-diacyl-sn-glycero-3-phosphocholine + H2O = a 1-acyl-sn-glycero-3-phosphocholine + a fatty acid + H(+). It catalyses the reaction a 1,2-diacyl-sn-glycero-3-phosphocholine + H2O = a 2-acyl-sn-glycero-3-phosphocholine + a fatty acid + H(+). The catalysed reaction is 1,2-dihexadecanoyl-sn-glycero-3-phosphocholine + H2O = 1-hexadecanoyl-sn-glycero-3-phosphocholine + hexadecanoate + H(+). The enzyme catalyses 1,2-dihexadecanoyl-sn-glycero-3-phosphocholine + H2O = 2-hexadecanoyl-sn-glycero-3-phosphocholine + hexadecanoate + H(+). It carries out the reaction 1-hexadecanoyl-2-(9Z-octadecenoyl)-sn-glycero-3-phosphocholine + H2O = 2-(9Z-octadecenoyl)-sn-glycero-3-phosphocholine + hexadecanoate + H(+). It catalyses the reaction 1-hexadecanoyl-2-(9Z-octadecenoyl)-sn-glycero-3-phosphocholine + H2O = 1-hexadecanoyl-sn-glycero-3-phosphocholine + (9Z)-octadecenoate + H(+). The catalysed reaction is 1-hexadecanoyl-2-(5Z,8Z,11Z,14Z-eicosatetraenoyl)-sn-glycero-3-phosphocholine + H2O = 1-hexadecanoyl-sn-glycero-3-phosphocholine + (5Z,8Z,11Z,14Z)-eicosatetraenoate + H(+). The enzyme catalyses 1-hexadecanoyl-2-(5Z,8Z,11Z,14Z-eicosatetraenoyl)-sn-glycero-3-phosphocholine + H2O = 2-(5Z,8Z,11Z,14Z)-eicosatetraenoyl-sn-glycero-3-phosphocholine + hexadecanoate + H(+). It carries out the reaction 1-hexadecanoyl-2-(9Z,12Z-octadecadienoyl)-sn-glycero-3-phosphoethanolamine + H2O = 1-hexadecanoyl-sn-glycero-3-phosphoethanolamine + (9Z,12Z)-octadecadienoate + H(+). It catalyses the reaction 1-hexadecanoyl-2-(9Z,12Z-octadecadienoyl)-sn-glycero-3-phosphoethanolamine + H2O = 2-(9Z,12Z)-octadecadienoyl-sn-glycero-3-phosphoethanolamine + hexadecanoate + H(+). The catalysed reaction is 1-hexadecanoyl-2-(5Z,8Z,11Z,14Z-eicosatetraenoyl)-sn-glycero-3-phosphoethanolamine + H2O = 1-hexadecanoyl-sn-glycero-3-phosphoethanolamine + (5Z,8Z,11Z,14Z)-eicosatetraenoate + H(+). The enzyme catalyses 1-hexadecanoyl-2-(5Z,8Z,11Z,14Z-eicosatetraenoyl)-sn-glycero-3-phosphoethanolamine + H2O = 2-(5Z,8Z,11Z,14Z)-eicosatetraenoyl-sn-glycero-3-phosphoethanolamine + hexadecanoate + H(+). It carries out the reaction 1-hexanoyl-2-acyl-sn-glycero-3-phosphocholine + H2O = hexanoate + a 2-acyl-sn-glycero-3-phosphocholine + H(+). It catalyses the reaction 1-hexanoyl-2-acyl-sn-glycero-3-phosphocholine + H2O = 1-hexanoyl-sn-glycero-3-phosphocholine + a fatty acid + H(+). The catalysed reaction is 1,2-diheptadecanoyl-sn-glycero-3-phosphoethanolamine + 1-(9Z-octadecenoyl)-2-hexadecanoyl-sn-glycero-3-phosphocholine = 1,2-diheptadecanoyl-sn-glycero-3-phospho-N-hexadecanoyl-ethanolamine + 1-(9Z-octadecenoyl)-sn-glycero-3-phosphocholine + H(+). The enzyme catalyses 1,2-diheptadecanoyl-sn-glycero-3-phosphoethanolamine + 1-(9Z-octadecenoyl)-2-hexadecanoyl-sn-glycero-3-phosphocholine = 1,2-diheptadecanoyl-sn-glycero-3-phospho-N-(9Z-octadecenoyl)-ethanolamine + 2-hexadecanoyl-sn-glycero-3-phosphocholine + H(+). It carries out the reaction 1,2-dihexanoyl-sn-glycero-3-phosphoethanolamine + 2-heptanoyl-sn-glycero-3-phosphocholine = hexanoyl-sn-glycero-3-phosphoethanolamine + 1-hexanoyl-2-heptanoyl-sn-glycero-3-phosphocholine. It catalyses the reaction 1-hexadecanoyl-2-octadecanoyl-sn-glycero-3-phosphocholine + H2O = octadecanoate + 1-hexadecanoyl-sn-glycero-3-phosphocholine + H(+). The catalysed reaction is 1-hexadecanoyl-2-octadecanoyl-sn-glycero-3-phosphocholine + H2O = 2-octadecanoyl-sn-glycero-3-phosphocholine + hexadecanoate + H(+). The enzyme catalyses 1-octadecanoyl-2-hexadecanoyl-sn-glycero-3-phosphocholine + H2O = 1-octadecanoyl-sn-glycero-3-phosphocholine + hexadecanoate + H(+). It carries out the reaction 1-octadecanoyl-2-hexadecanoyl-sn-glycero-3-phosphocholine + H2O = 2-hexadecanoyl-sn-glycero-3-phosphocholine + octadecanoate + H(+). It catalyses the reaction 1-hexadecanoyl-2-(9Z,12Z-octadecadienoyl)-sn-glycero-3-phosphocholine + H2O = (9Z,12Z)-octadecadienoate + 1-hexadecanoyl-sn-glycero-3-phosphocholine + H(+). The catalysed reaction is 1-hexadecanoyl-2-(9Z,12Z-octadecadienoyl)-sn-glycero-3-phosphocholine + H2O = 2-(9Z,12Z-octadecadienoyl)-sn-glycero-3-phosphocholine + hexadecanoate + H(+). The enzyme catalyses 1,2-di-(9Z-octadecenoyl)-sn-glycero-3-phosphocholine + H2O = 2-(9Z-octadecenoyl)-sn-glycero-3-phosphocholine + (9Z)-octadecenoate + H(+). It carries out the reaction 1,2-dihexadecanoyl-sn-glycero-3-phosphocholine + H2O = hexadecanoyl-sn-glycero-3-phosphocholine + hexadecanoate + H(+). It catalyses the reaction 1,2-di-(9Z-octadecenoyl)-sn-glycero-3-phosphocholine + H2O = 1-(9Z-octadecenoyl)-sn-glycero-3-phosphocholine + (9Z)-octadecenoate + H(+). The catalysed reaction is 1,2-di-(9Z-octadecenoyl)-sn-glycero-3-phosphoethanolamine + 1,2-dihexadecanoyl-sn-glycero-3-phosphocholine = hexadecanoyl-sn-glycero-3-phosphocholine + N-hexadecanoyl-1,2-di-(9Z-octadecenoyl)-sn-glycero-3-phosphoethanolamine + H(+). The enzyme catalyses 1,2-di-(9Z,12Z-octadecadienoyl)-sn-glycero-3-phosphocholine + H2O = 1-(9Z,12Z)-octadecadienoyl-sn-glycero-3-phosphocholine + (9Z,12Z)-octadecadienoate + H(+). In terms of biological role, exhibits both phospholipase A1/2 and acyltransferase activities. Shows phospholipase A1 (PLA1) and A2 (PLA2), catalyzing the calcium-independent release of fatty acids from the sn-1 or sn-2 position of glycerophospholipids. For most substrates, PLA1 activity is much higher than PLA2 activity. Shows O-acyltransferase activity, catalyzing the transfer of a fatty acyl group from glycerophospholipid to the hydroxyl group of lysophospholipid. Shows N-acyltransferase activity,catalyzing the calcium-independent transfer of a fatty acyl group at the sn-1 position of phosphatidylcholine (PC) and other glycerophospholipids to the primary amine of phosphatidylethanolamine (PE), forming N-acylphosphatidylethanolamine (NAPE), which serves as precursor for N-acylethanolamines (NAEs). Exhibits high N-acyltransferase activity and low phospholipase A1/2 activity. Required for complete organelle rupture and degradation that occur during eye lens terminal differentiation, when fiber cells that compose the lens degrade all membrane-bound organelles in order to provide lens with transparency to allow the passage of light. Organelle membrane degradation is probably catalyzed by the phospholipase activity. Functionally, (Microbial infection) Acts as a host factor for picornaviruses: required during early infection to promote viral genome release into the cytoplasm. The chain is Phospholipase A and acyltransferase 3 from Mus musculus (Mouse).